The chain runs to 214 residues: MTSFVLASASPARLAVLRSAGVEPVVRVSGVDEDALIAALGADAAPEHVVTELARAKAKDVLPVLARDGISDAVIVGCDSMLLIDGALQGKPGTVDVARERWSSMAGRSATLLTGHSVLRITEGAVVGDAHDHSATVVHFASPPDADLEAYLATGEPLQVAGAFTLDSLGGWFVDRIEGDPSSVIGIGLPLVRRLLADVGVGVAELWATSGRGD.

Asp-79 (proton acceptor) is an active-site residue.

Belongs to the Maf family. The cofactor is a divalent metal cation.

The protein localises to the cytoplasm. It carries out the reaction a ribonucleoside 5'-triphosphate + H2O = a ribonucleoside 5'-phosphate + diphosphate + H(+). The catalysed reaction is a 2'-deoxyribonucleoside 5'-triphosphate + H2O = a 2'-deoxyribonucleoside 5'-phosphate + diphosphate + H(+). Functionally, nucleoside triphosphate pyrophosphatase. May have a dual role in cell division arrest and in preventing the incorporation of modified nucleotides into cellular nucleic acids. The protein is Nucleoside triphosphate pyrophosphatase of Rhodococcus opacus (strain B4).